We begin with the raw amino-acid sequence, 492 residues long: Aerolysin (492 aa).

The first 21 residues, 1-21 (MKALKITGLSLIISATLAAQT), serve as a signal peptide directing secretion. Intrachain disulfides connect Cys42–Cys98 and Cys182–Cys187. Residues 68 to 84 (WQISGLANNWVILGPGY) form an interaction with host N-linked glycan region. The part of the transmembrane beta-barrel after proteolytic activation of the toxin and insertion into the host membrane stretch occupies residues 256–288 (YGLSEKVSTKNKFKWPLVGETEVSIEIAANQSW). Residues 346–355 (RWGGNAWHTH) form an interaction with glycans from host GPI-anchor region. The propeptide occupies 446-492 (GSDSKVRRTRSVDGANTGLKLDIPLDAQELAELGFENVTLSVTPARN).

The protein belongs to the aerolysin family. As to quaternary structure, homodimer in solution; homoheptamer in the host membrane. After binding to GPI-anchored proteins in target membranes and proteolytic removal of the C-terminal propeptide, the protein assembles into a heptameric pre-pore complex. A further conformation change leads to insertion into the host membrane. In terms of processing, proteolytic cleavage and subsequent release of the propeptide trigger a major conformation change, leading to the formation of a heptameric pre-pore that then inserts into the host membrane.

It is found in the secreted. The protein localises to the host cell membrane. Secreted, cytolytic toxin that forms pores in host membranes after proteolytic removal of a C-terminal propeptide, leading to destruction of the membrane permeability barrier and cell death. The pores are formed by transmembrane beta-strands and are approximately 3 nm in diameter. This Aeromonas enteropelogenes (Aeromonas trota) protein is Aerolysin (aerA).